The following is a 725-amino-acid chain: Methionine--tRNA ligase (725 aa).

The 'HIGH' region signature appears at 27-37; the sequence is PYANGQIHIGH. Residues cysteine 158, cysteine 161, cysteine 171, and cysteine 174 each contribute to the Zn(2+) site. Residues 348–352 carry the 'KMSKS' region motif; the sequence is KMSKS. Lysine 351 serves as a coordination point for ATP. In terms of domain architecture, tRNA-binding spans 619–725; that stretch reads DFAKIDLRIA…SGAKPGMRVK (107 aa).

The protein belongs to the class-I aminoacyl-tRNA synthetase family. MetG type 1 subfamily. In terms of assembly, homodimer. It depends on Zn(2+) as a cofactor.

The protein localises to the cytoplasm. It carries out the reaction tRNA(Met) + L-methionine + ATP = L-methionyl-tRNA(Met) + AMP + diphosphate. Functionally, is required not only for elongation of protein synthesis but also for the initiation of all mRNA translation through initiator tRNA(fMet) aminoacylation. This is Methionine--tRNA ligase from Burkholderia pseudomallei (strain 668).